A 78-amino-acid polypeptide reads, in one-letter code: UPF0270 protein YPTB3725 (78 aa).

Belongs to the UPF0270 family.

This chain is UPF0270 protein YPTB3725, found in Yersinia pseudotuberculosis serotype I (strain IP32953).